The following is a 907-amino-acid chain: Protein translocase subunit SecA (907 aa).

ATP is bound by residues Gln87, Gly105–Thr109, and Asp512. The interval Ala870–Lys897 is disordered. Zn(2+) contacts are provided by Cys891, Cys893, Cys902, and His903.

This sequence belongs to the SecA family. As to quaternary structure, monomer and homodimer. Part of the essential Sec protein translocation apparatus which comprises SecA, SecYEG and auxiliary proteins SecDF-YajC and YidC. Zn(2+) serves as cofactor.

The protein localises to the cell inner membrane. It is found in the cytoplasm. It catalyses the reaction ATP + H2O + cellular proteinSide 1 = ADP + phosphate + cellular proteinSide 2.. Functionally, part of the Sec protein translocase complex. Interacts with the SecYEG preprotein conducting channel. Has a central role in coupling the hydrolysis of ATP to the transfer of proteins into and across the cell membrane, serving both as a receptor for the preprotein-SecB complex and as an ATP-driven molecular motor driving the stepwise translocation of polypeptide chains across the membrane. This Shewanella piezotolerans (strain WP3 / JCM 13877) protein is Protein translocase subunit SecA.